The following is an 805-amino-acid chain: Leucine--tRNA ligase (805 aa).

Positions 40 to 51 (PYPSGQGLHVGH) match the 'HIGH' region motif. The short motif at 577–581 (KMSKS) is the 'KMSKS' region element. An ATP-binding site is contributed by Lys-580.

It belongs to the class-I aminoacyl-tRNA synthetase family.

It is found in the cytoplasm. The catalysed reaction is tRNA(Leu) + L-leucine + ATP = L-leucyl-tRNA(Leu) + AMP + diphosphate. The chain is Leucine--tRNA ligase from Limosilactobacillus fermentum (strain NBRC 3956 / LMG 18251) (Lactobacillus fermentum).